Consider the following 351-residue polypeptide: Ubiquinol oxidase 4, chloroplastic/chromoplastic (351 aa).

The N-terminal 56 residues, 1-56 (MAAISGISSGTLTISRPLVTLRRSRAAVSYSSSHRLLHHLPLSSRRLLLRNNHRVQ), are a transit peptide targeting the chloroplast and chromoplast. The tract at residues 71–91 (ESFKAETSTGTEPLEEPNMSS) is disordered. Residues 132–152 (FFVLETIARVPYFAFMSVLHM) traverse the membrane as a helical segment. Fe cation is bound by residues Glu-136, Glu-175, and His-178. The chain crosses the membrane as a helical span at residues 195 to 215 (FLAQHIATFYYFMTVFLYILS). Glu-227, Glu-296, and His-299 together coordinate Fe cation.

Belongs to the alternative oxidase family. Requires Fe cation as cofactor. As to expression, ubiquitous.

It is found in the plastid. It localises to the chloroplast thylakoid membrane. The protein localises to the chromoplast membrane. The enzyme catalyses 2 a ubiquinol + O2 = 2 a ubiquinone + 2 H2O. Functionally, acts early in chloroplast biogenesis as a component of a redox chain responsible for phytoene desaturation. Prevents the generation of toxic oxygen radicals and photooxidation of the nascent photosynthetic apparatus. Involved in the differentiation of multiple plastid types, including chloroplasts, amyloplasts, and etioplasts. Might participate in the chloroplast respiratory chain. This chain is Ubiquinol oxidase 4, chloroplastic/chromoplastic (AOX4), found in Arabidopsis thaliana (Mouse-ear cress).